We begin with the raw amino-acid sequence, 283 residues long: Pantothenate synthetase (283 aa).

30–37 (MGTLHDGH) contributes to the ATP binding site. The active-site Proton donor is the H37. Q61 contacts (R)-pantoate. Q61 is a beta-alanine binding site. Residue 148-151 (GLKD) coordinates ATP. Q154 serves as a coordination point for (R)-pantoate. Residue 185-188 (MSSR) coordinates ATP.

This sequence belongs to the pantothenate synthetase family. As to quaternary structure, homodimer.

It is found in the cytoplasm. The enzyme catalyses (R)-pantoate + beta-alanine + ATP = (R)-pantothenate + AMP + diphosphate + H(+). It participates in cofactor biosynthesis; (R)-pantothenate biosynthesis; (R)-pantothenate from (R)-pantoate and beta-alanine: step 1/1. Catalyzes the condensation of pantoate with beta-alanine in an ATP-dependent reaction via a pantoyl-adenylate intermediate. This Leptospira biflexa serovar Patoc (strain Patoc 1 / Ames) protein is Pantothenate synthetase.